Reading from the N-terminus, the 2624-residue chain is MAIVTAFEDEPINGNGMLNAPSISPDPVLPLAIVGMGMRLPGAIHTPEHLWQTLVNKRSTRCEIPDTRFSTNGFHSPSAKPGSIAMRHGHFLADSDSLHHLDPSFFSMGMNEAVDIDPQQRLLLEVVYECMESSGQVNWQGSKIGCWVGVWGEDWLDLHAKDTFDSGMFRIAGGHDFAISNRISYEYNLKGPSYTIKAGCSSSLIALHEAVRALRAGDCDGAIVAGTNLIFSPTMSIGMTEQGVLSPDASCKSFDANANGYARGEAINAIYLKRLDVALQNGDSVRAVVRGTSSNSDGKTPGMSMPSSESHISLIRQAYREAGLDPAQTPFVEAHGTGTPVGDPLEAIAIARVFGGRDRTLYLGSVKPNLGHSEGASGISSILKAIQAMEHRTIPPNLNFNVPNPKIPFAESNMVVPCASVPWPEGQPVRVSVNSFGIGGSNAHCILESVEEYLGAHGAPWMPIGTRLSNTYTSCFPRLNFNKTDGGISTTSLSARSVNGMTNLIVHSTDEEMMQSPAVQARESYSNHHTLTETTNPSNNTATNGVVGYQPRKLLYVVSAGNATSLTAKIMDLHRYHQDHQAQAVDVAYTLCNRRDHLTHRTYAIASAQPSEGCLSDPALEFSPPAKINTTTPSHAVMVFTGQGAQWAGMASELVSDYPVFRATVSRLSRVLSQLEHAPAWNLLEELRKPEATSRIGEAEFSQPLVCAVQVGLVDLLRHWGLSAAAVIGHSSGEIGAAYAADAITADEAITIAYYRGYVNKSHTRQGGMAAIGLGVSQVAPFLSEGVTIACDNSPQSATISGDKDVLRDVCSMIRRKQPDCLVRELKVPAAYHSHHMLDLGGTLESLLKGKVHSQAPAIPFFSSVKVKEIREPGSLDAAYWRENLESPVQFTGALKILLAAQPSLSRTVFVEIGPHSALAGPLRQIFKAHGTGQEGYTPAMIRGKDCVDSVLSLVGDLFLQGITLDLSRISPPANVITDLPLYPWNHEKEFWSESRVGRDWRFRKYPNHELLGSQTLESSKLQPQWRNMLKLEHVPWLRDHQVMNDTIFPCAGYLAMAVEAVRQATEAADVEGFSLRNVVVRAALVVTESKPVELLTALQPVRLTNTLDSVWWEFSIMSHNGSVWQKHCNGQVRPGRDAHHIKAAFSEQAVVSRDKQYPRPVDSLYSELYRLGLRYGPAFCGLNKVHCQPGGKQASAILMETIVSESSYAIHPTTIDHCLQLLFPASCEGIFYRAEKLCVPTGIDNLYLADGKTRESEGARIEASSVARSGGAIFGAAKAFSKIDDALLLSLEGGKFSPIEVDDGIVEDLDPLASAHLVWKPHLDFADMHDLIRPNQDLINDRHNIDLVERLTLVAMMFIQERMGSVSSPANLDHIARFRNWIDAQVAGLKNGTYSGLEKDVEELLSLKPNDRLPLLKELEQIIIQSAPASTAVLICRIIDRCDDILQGRIDGIEVLQADNGLTNFYNYIESRTESVDFLTAAGHTQPTLRILEIGAGTGGASQVVLDSLTNQAEHSRLYSTYAYTDVSAGFFVAARERFKKYPALDFRVLDISKDPLEQGFHASSFDLIIANNVLHATPFLSQTLANVRKLLAPEGYLFLQELSPKMRMVNLIMGILPGWWLGAAEGRSEEPYLSPEQWDSLLRQTGFSSVDVVYDAPSPYQVNANIIARAASEPQARDEKSNGALGAPKAVLLHAPGDEVSERAAQIRSSLEESGLDTSLISIEQFQANATDTQGIIVSLLDLTTPFFASMSASKLTAIQSLVANLGSAHMMWILPRAQKDVSCSDDPAYGMSLGLIRTLRSERSVAITTVEVDTFDNAAFSAVARLAIKLAHQQQGDRTSISSGSDLDPDREFVLTKGVLETGRFHPVSLTHEMAAHAPASEATTLRIGRAGLLQTLKWVDLAIKEPEHNEVVVEPRCVGLNFRDVLVCMGIVEANDVSIGLEGSGVVRKVGNGVTGLQAGDRVFYMADNCFSSQITISALRCVKIPSSLSFEQAATMPCVYATVIHSLLDMGGLQSGQSVLIHSACGGIGIAALNLCRAMPGVEVYVTVGSEEKVQYLMQEFGLAREQIFHSRDTSFVEDVRAATGGRGVDVVLNSLSGELLHASWECVAPYGKMLEIGKRDFIGKAQLAMDLFEANRSFIGIDLARFDAARCGRLLQRTIDMYVAGAIQPVAPIKVFGATEAEASFRYMQKGTHLGKIVVSIGKAAAAAATTRQAVPTQLNPVATYVLVGGLGGLGRAVATWMVERGARHLLFLSRSAGQQAAHQAFFTELQCQGCSAQAVQGDVTLLGDVERALAAAPAGKPVRGILQMAMVLRDKAFADMDLADWHDTVTAKVLGTWNLHRAAPADMDFFLATGSISGLFGLPGQANYAAANSYLTALVQHRRAHGMPASVVHIGMIEDVGYLAENPARADALRAAGGFFLRTRQLLQAIDWALAPPSHKPHHLDHELAIGLRTTKPLLDPGNRVVWRSDPRMGLYHNLTATVATTADDGSDDSDALRFFITSITAEPALLDDPASLDLVTRTIGTRIYTFMLHPLDDIDSTASLTALGVDSLVTIELRNWIKRNFAGLDFSTLEILDARTIAGLAKLILDALKARFGSSTADQQRLQSDYLNMKAP.

The Ketosynthase family 3 (KS3) domain maps to 28–449 (VLPLAIVGMG…GSNAHCILES (422 aa)). C200 (for beta-ketoacyl synthase activity) is an active-site residue. Residues 289 to 308 (VRGTSSNSDGKTPGMSMPSS) form a disordered region. Catalysis depends on for beta-ketoacyl synthase activity residues H335 and H372. The span at 523-544 (ESYSNHHTLTETTNPSNNTATN) shows a compositional bias: polar residues. The interval 523–545 (ESYSNHHTLTETTNPSNNTATNG) is disordered. A malonyl-CoA:ACP transacylase (MAT) domain region spans residues 639-945 (VFTGQGAQWA…GYTPAMIRGK (307 aa)). Positions 1009–1140 (HELLGSQTLE…GQVRPGRDAH (132 aa)) are N-terminal hotdog fold. Positions 1009–1301 (HELLGSQTLE…LEGGKFSPIE (293 aa)) are dehydratase (DH) domain. In terms of domain architecture, PKS/mFAS DH spans 1009–1306 (HELLGSQTLE…FSPIEVDDGI (298 aa)). H1041 (proton acceptor; for dehydratase activity) is an active-site residue. Positions 1157–1306 (QYPRPVDSLY…FSPIEVDDGI (150 aa)) are C-terminal hotdog fold. The Proton donor; for dehydratase activity role is filled by D1217. The segment at 1493–1599 (LEIGAGTGGA…RKLLAPEGYL (107 aa)) is methyltransferase (CMet) domain. Positions 1895–2205 (GLLQTLKWVD…KGTHLGKIVV (311 aa)) are enoyl reductase (ER) (ER) domain. Residues 2230–2509 (TYVLVGGLGG…DSDALRFFIT (280 aa)) are ketoreductase (KR) domain. One can recognise a Carrier domain in the interval 2522 to 2600 (ASLDLVTRTI…GLAKLILDAL (79 aa)). S2559 is subject to O-(pantetheine 4'-phosphoryl)serine.

Its pathway is mycotoxin biosynthesis. Highly reducing polyketide synthase; part of the gene cluster that mediates the biosynthesis of the host-selective toxins (HSTs) AAL-toxins, sphinganine-analog mycotoxins responsible for Alternaria stem canker on tomato by the tomato pathotype. The biosynthesis starts with the polyketide synthase ALT1-catalyzed C-16 carbon chain assembly from one starter acetyl-CoA unit with malonyl-CoA extender units. ALT1 also selectively transfers methyl groups at the first and the third cycle of chain elongation for AAL toxin. The C-16 polyketide chain is released from the enzyme by a nucleophilic attack of a carbanion, which is derived from R-carbon of glycin by decarboxylation, on the carbonyl carbon of polyketide acyl chain. This step is probably catalyzed by a pyridoxal 5'-phosphate-dependent aminoacyl transferase ALT4. The respective functions of the other enzymes encoded by the cluster have still to be elucidated. The sphingosine N-acyltransferase-like protein ALT7 seems not to act as a resistance/self-tolerance factor against the toxin in the toxin biosynthetic gene cluster, contrary to what is expected. The polypeptide is Highly reducing polyketide synthase ALT1 (Alternaria alternata (Alternaria rot fungus)).